Here is a 501-residue protein sequence, read N- to C-terminus: TGF-beta receptor type-1 (501 aa).

The N-terminal stretch at 1–29 (MEAASAALRRCLLLIVLVAAATLLPGAKA) is a signal peptide. The Extracellular portion of the chain corresponds to 30–124 (LQCFCHLCTK…QSAGLGPVEL (95 aa)). 5 disulfide bridges follow: C32-C50, C34-C37, C44-C67, C82-C94, and C95-C100. N-linked (GlcNAc...) asparagine glycosylation is present at N41. Residues 125–145 (AAVIAGPVCFVCIALMLMVYI) traverse the membrane as a helical segment. Topologically, residues 146–501 (CHNRTVIHHR…QLSQQEGIKM (356 aa)) are cytoplasmic. A Phosphoserine modification is found at S163. One can recognise a GS domain in the interval 173–202 (TTLKDLIYDMTTSGSGSGLPLLVQRTIART). Phosphothreonine; by TGFBR2 is present on residues T183 and T184. A phosphoserine; by TGFBR2 mark is found at S185, S187, and S189. The short motif at 191–192 (LP) is the FKBP1A-binding element. A Protein kinase domain is found at 203–493 (IVLQESIGKG…LRIKKTLSQL (291 aa)). Residues 209-217 (IGKGRFGEV) and K230 each bind ATP. D331 functions as the Proton acceptor in the catalytic mechanism. K389 is covalently cross-linked (Glycyl lysine isopeptide (Lys-Gly) (interchain with G-Cter in SUMO)).

It belongs to the protein kinase superfamily. TKL Ser/Thr protein kinase family. TGFB receptor subfamily. As to quaternary structure, homodimer; in the endoplasmic reticulum but also at the cell membrane. Heterohexamer; TGFB1, TGFB2 and TGFB3 homodimeric ligands assemble a functional receptor composed of two TGFBR1 and TGFBR2 heterodimers to form a ligand-receptor heterohexamer. The respective affinity of TGBRB1 and TGFBR2 for the ligands may modulate the kinetics of assembly of the receptor and may explain the different biological activities of TGFB1, TGFB2 and TGFB3. Component of a complex composed of TSC22D1 (via N-terminus), TGFBR1 and TGFBR2; the interaction between TSC22D1 and TGFBR1 is inhibited by SMAD7 and promoted by TGFB1. Interacts with CD109; inhibits TGF-beta receptor activation in keratinocytes. Interacts with RBPMS. Interacts with SMAD2, SMAD3 and ZFYVE9; ZFYVE9 recruits SMAD2 and SMAD3 to the TGF-beta receptor. Interacts with TRAF6 and MAP3K7; induces MAP3K7 activation by TRAF6. Interacts with PARD6A; involved in TGF-beta induced epithelial to mesenchymal transition. Interacts with NEDD4L. Interacts with SMAD7, SMURF1 and SMURF2; SMAD7 recruits NEDD4L, SMURF1 and SMURF2 to the TGF-beta receptor. Interacts with USP15 and VPS39. Interacts (unphosphorylated) with FKBP1A; prevents TGFBR1 phosphorylation by TGFBR2 and stabilizes it in the inactive conformation. Interacts with SDCBP (via C-terminus). Interacts with CAV1 and this interaction is impaired in the presence of SDCBP. Interacts with APPL1; interaction is TGF beta dependent; mediates trafficking of the TGFBR1 from the endosomes to the nucleus via microtubules in a TRAF6-dependent manner. Interacts with GPR50; this interaction promotes the constitutive activation of SMAD signaling pathway. It depends on Mg(2+) as a cofactor. Mn(2+) serves as cofactor. In terms of processing, phosphorylated at basal levels in the absence of ligand. Activated upon phosphorylation by TGFBR2, mainly in the GS domain. Phosphorylation in the GS domain abrogates FKBP1A-binding. Post-translationally, N-Glycosylated. Ubiquitinated; undergoes ubiquitination catalyzed by several E3 ubiquitin ligases including SMURF1, SMURF2 and NEDD4L2. Results in the proteasomal and/or lysosomal degradation of the receptor thereby negatively regulating its activity. Deubiquitinated by USP15, leading to stabilization of the protein and enhanced TGF-beta signal. Its ubiquitination and proteasome-mediated degradation is negatively regulated by SDCBP. As to expression, urogenital ridge, testis, ovary, brain and lungs.

It localises to the cell membrane. Its subcellular location is the cell junction. It is found in the tight junction. The protein localises to the membrane raft. The protein resides in the cell surface. The catalysed reaction is L-threonyl-[receptor-protein] + ATP = O-phospho-L-threonyl-[receptor-protein] + ADP + H(+). It catalyses the reaction L-seryl-[receptor-protein] + ATP = O-phospho-L-seryl-[receptor-protein] + ADP + H(+). Its activity is regulated as follows. Kept in an inactive conformation by FKBP1A preventing receptor activation in absence of ligand. CD109 is another inhibitor of the receptor. Transmembrane serine/threonine kinase forming with the TGF-beta type II serine/threonine kinase receptor, TGFBR2, the non-promiscuous receptor for the TGF-beta cytokines TGFB1, TGFB2 and TGFB3. Transduces the TGFB1, TGFB2 and TGFB3 signal from the cell surface to the cytoplasm and is thus regulating a plethora of physiological and pathological processes including cell cycle arrest in epithelial and hematopoietic cells, control of mesenchymal cell proliferation and differentiation, wound healing, extracellular matrix production, immunosuppression and carcinogenesis. The formation of the receptor complex composed of 2 TGFBR1 and 2 TGFBR2 molecules symmetrically bound to the cytokine dimer results in the phosphorylation and the activation of TGFBR1 by the constitutively active TGFBR2. Activated TGFBR1 phosphorylates SMAD2 which dissociates from the receptor and interacts with SMAD4. The SMAD2-SMAD4 complex is subsequently translocated to the nucleus where it modulates the transcription of the TGF-beta-regulated genes. This constitutes the canonical SMAD-dependent TGF-beta signaling cascade. Also involved in non-canonical, SMAD-independent TGF-beta signaling pathways. For instance, TGFBR1 induces TRAF6 autoubiquitination which in turn results in MAP3K7 ubiquitination and activation to trigger apoptosis. Also regulates epithelial to mesenchymal transition through a SMAD-independent signaling pathway through PARD6A phosphorylation and activation. The chain is TGF-beta receptor type-1 (Tgfbr1) from Rattus norvegicus (Rat).